The chain runs to 145 residues: AP-2 complex subunit sigma (145 aa).

The protein belongs to the adaptor complexes small subunit family. In terms of assembly, adaptor protein complex 2 (AP-2) is a heterotetramer composed of two large adaptins (alpha-type subunit apl3 and beta-type subunit apl1), a medium chain (mu-type subunit apm4) and a small adaptin (sigma-type subunit aps2).

Its subcellular location is the cell membrane. It is found in the membrane. It localises to the coated pit. In terms of biological role, component of the adaptor complexes which link clathrin to receptors in coated vesicles. Clathrin-associated protein complexes are believed to interact with the cytoplasmic tails of membrane proteins, leading to their selection and concentration. The polypeptide is AP-2 complex subunit sigma (aps2) (Emericella nidulans (strain FGSC A4 / ATCC 38163 / CBS 112.46 / NRRL 194 / M139) (Aspergillus nidulans)).